A 527-amino-acid chain; its full sequence is Glutamate--cysteine ligase (527 aa).

This sequence belongs to the glutamate--cysteine ligase type 1 family. Type 1 subfamily.

It carries out the reaction L-cysteine + L-glutamate + ATP = gamma-L-glutamyl-L-cysteine + ADP + phosphate + H(+). Its pathway is sulfur metabolism; glutathione biosynthesis; glutathione from L-cysteine and L-glutamate: step 1/2. The protein is Glutamate--cysteine ligase of Pseudomonas aeruginosa (strain LESB58).